The chain runs to 166 residues: 3-isopropylmalate dehydratase small subunit (166 aa).

The protein belongs to the LeuD family. LeuD type 2 subfamily. In terms of assembly, heterodimer of LeuC and LeuD.

The enzyme catalyses (2R,3S)-3-isopropylmalate = (2S)-2-isopropylmalate. It participates in amino-acid biosynthesis; L-leucine biosynthesis; L-leucine from 3-methyl-2-oxobutanoate: step 2/4. Its function is as follows. Catalyzes the isomerization between 2-isopropylmalate and 3-isopropylmalate, via the formation of 2-isopropylmaleate. The protein is 3-isopropylmalate dehydratase small subunit of Heliobacterium modesticaldum (strain ATCC 51547 / Ice1).